The following is a 282-amino-acid chain: Probable porphobilinogen deaminase (282 aa).

Cys-233 is subject to S-(dipyrrolylmethanemethyl)cysteine.

It belongs to the HMBS family. It depends on dipyrromethane as a cofactor.

The catalysed reaction is 4 porphobilinogen + H2O = hydroxymethylbilane + 4 NH4(+). It functions in the pathway porphyrin-containing compound metabolism; protoporphyrin-IX biosynthesis; coproporphyrinogen-III from 5-aminolevulinate: step 2/4. Its function is as follows. Tetrapolymerization of the monopyrrole PBG into the hydroxymethylbilane pre-uroporphyrinogen in several discrete steps. This Picrophilus torridus (strain ATCC 700027 / DSM 9790 / JCM 10055 / NBRC 100828 / KAW 2/3) protein is Probable porphobilinogen deaminase.